The sequence spans 337 residues: Anthranilate phosphoribosyltransferase (337 aa).

5-phospho-alpha-D-ribose 1-diphosphate is bound by residues glycine 81, 84–85 (GD), threonine 89, 91–94 (NIST), 109–117 (KHGNRALSS), and threonine 121. Glycine 81 contributes to the anthranilate binding site. Residue serine 93 coordinates Mg(2+). Asparagine 112 is an anthranilate binding site. Arginine 167 is a binding site for anthranilate. Mg(2+) contacts are provided by aspartate 225 and glutamate 226.

Belongs to the anthranilate phosphoribosyltransferase family. Homodimer. Mg(2+) is required as a cofactor.

It catalyses the reaction N-(5-phospho-beta-D-ribosyl)anthranilate + diphosphate = 5-phospho-alpha-D-ribose 1-diphosphate + anthranilate. It functions in the pathway amino-acid biosynthesis; L-tryptophan biosynthesis; L-tryptophan from chorismate: step 2/5. Its function is as follows. Catalyzes the transfer of the phosphoribosyl group of 5-phosphorylribose-1-pyrophosphate (PRPP) to anthranilate to yield N-(5'-phosphoribosyl)-anthranilate (PRA). The sequence is that of Anthranilate phosphoribosyltransferase from Sinorhizobium medicae (strain WSM419) (Ensifer medicae).